Here is a 258-residue protein sequence, read N- to C-terminus: Snake venom serine protease PA (258 aa).

The signal sequence occupies residues 1 to 18 (MVLIRVLANLLILQLSYA). A propeptide spanning residues 19–24 (QKSPEL) is cleaved from the precursor. One can recognise a Peptidase S1 domain in the interval 25–249 (VVGGDECNIN…YNDWIKSIIA (225 aa)). Intrachain disulfides connect cysteine 31-cysteine 163, cysteine 50-cysteine 66, cysteine 98-cysteine 256, cysteine 142-cysteine 210, cysteine 174-cysteine 189, and cysteine 200-cysteine 225. An N-linked (GlcNAc...) asparagine glycan is attached at asparagine 44. Residues histidine 65 and aspartate 110 each act as charge relay system in the active site. Serine 204 (charge relay system) is an active-site residue.

Belongs to the peptidase S1 family. Snake venom subfamily. As to quaternary structure, monomer. As to expression, expressed by the venom gland.

Its subcellular location is the secreted. Functionally, snake venom serine protease that may act in the hemostasis system of the prey. The sequence is that of Snake venom serine protease PA from Trimeresurus stejnegeri (Chinese green tree viper).